Here is a 256-residue protein sequence, read N- to C-terminus: 6-carboxyhexanoate--CoA ligase (256 aa).

This sequence belongs to the BioW family. As to quaternary structure, homodimer. It depends on Mg(2+) as a cofactor.

The catalysed reaction is heptanedioate + ATP + CoA = 6-carboxyhexanoyl-CoA + AMP + diphosphate. Its pathway is metabolic intermediate metabolism; pimeloyl-CoA biosynthesis; pimeloyl-CoA from pimelate: step 1/1. In terms of biological role, catalyzes the transformation of pimelate into pimeloyl-CoA with concomitant hydrolysis of ATP to AMP. In Bacillus amyloliquefaciens (strain ATCC 23350 / DSM 7 / BCRC 11601 / CCUG 28519 / NBRC 15535 / NRRL B-14393 / F), this protein is 6-carboxyhexanoate--CoA ligase.